The sequence spans 448 residues: Exodeoxyribonuclease 7 large subunit (448 aa).

Belongs to the XseA family. In terms of assembly, heterooligomer composed of large and small subunits.

Its subcellular location is the cytoplasm. It carries out the reaction Exonucleolytic cleavage in either 5'- to 3'- or 3'- to 5'-direction to yield nucleoside 5'-phosphates.. In terms of biological role, bidirectionally degrades single-stranded DNA into large acid-insoluble oligonucleotides, which are then degraded further into small acid-soluble oligonucleotides. The polypeptide is Exodeoxyribonuclease 7 large subunit (Geobacillus kaustophilus (strain HTA426)).